A 95-amino-acid chain; its full sequence is Small ribosomal subunit protein bS18 (95 aa).

This sequence belongs to the bacterial ribosomal protein bS18 family. As to quaternary structure, part of the 30S ribosomal subunit. Forms a tight heterodimer with protein bS6.

Its function is as follows. Binds as a heterodimer with protein bS6 to the central domain of the 16S rRNA, where it helps stabilize the platform of the 30S subunit. The polypeptide is Small ribosomal subunit protein bS18 (Rickettsia akari (strain Hartford)).